The sequence spans 102 residues: Large ribosomal subunit protein bL21 (102 aa).

The protein belongs to the bacterial ribosomal protein bL21 family. Part of the 50S ribosomal subunit. Contacts protein L20.

Its function is as follows. This protein binds to 23S rRNA in the presence of protein L20. This Levilactobacillus brevis (strain ATCC 367 / BCRC 12310 / CIP 105137 / JCM 1170 / LMG 11437 / NCIMB 947 / NCTC 947) (Lactobacillus brevis) protein is Large ribosomal subunit protein bL21.